The following is a 114-amino-acid chain: Cystatin Pr17a (114 aa).

An N-terminal signal peptide occupies residues 1–18 (MSCLKIITLFLFLAAVIA). In terms of domain architecture, Cystatin spans 31-109 (GAPEQINPND…QAWLKKTSVK (79 aa)). A disulfide bridge connects residues cysteine 93 and cysteine 113.

The protein belongs to the cystatin family. Expressed by the venom gland (posterior main gland) (at protein level).

It is found in the secreted. This Platymeris rhadamanthus (Red spot assassin bug) protein is Cystatin Pr17a.